Reading from the N-terminus, the 1168-residue chain is Probable pre-mRNA-splicing factor ATP-dependent RNA helicase DEAH5 (1168 aa).

The disordered stretch occupies residues 76-206 (IYPPKPKSEK…KDEYVEEDKG (131 aa)). Composition is skewed to basic and acidic residues over residues 81–172 (PKSE…DRRS) and 180–206 (GRGDGGEGEDRRRDRRAKDEYVEEDKG). In terms of domain architecture, S1 motif spans 214 to 283 (YQVYKGRVTR…SSDKYSLSMR (70 aa)). The segment at 289–326 (TGRDLIPLRKPSDEDDSSRSNPSYRTKDGQVTKTGISG) is disordered. A Phosphoserine modification is found at serine 411. Positions 525–688 (IQAVHDNQVL…FFNCNIFTIP (164 aa)) constitute a Helicase ATP-binding domain. 538–545 (GETGSGKT) lines the ATP pocket. The DEAH box motif lies at 635–638 (DEAH). The Helicase C-terminal domain maps to 706-886 (YLDAALITVL…MTTLTMKAMG (181 aa)).

Belongs to the DEAD box helicase family. DEAH subfamily. PRP22 sub-subfamily.

Its subcellular location is the nucleus. The enzyme catalyses ATP + H2O = ADP + phosphate + H(+). May be involved in pre-mRNA splicing. The polypeptide is Probable pre-mRNA-splicing factor ATP-dependent RNA helicase DEAH5 (Arabidopsis thaliana (Mouse-ear cress)).